The following is a 386-amino-acid chain: Alpha-D-kanosaminyltransferase (386 aa).

Belongs to the glycosyltransferase group 1 family.

It carries out the reaction 2'-deamino-2'-hydroxyneamine + UDP-alpha-D-kanosamine = kanamycin A + UDP + H(+). It catalyses the reaction neamine + UDP-alpha-D-kanosamine = kanamycin B + UDP + H(+). The catalysed reaction is paromamine + UDP-alpha-D-kanosamine = kanamycin C + UDP + H(+). The enzyme catalyses 2'-deamino-2'-hydroxyparomamine + UDP-alpha-D-kanosamine = kanamycin X + UDP + H(+). Its pathway is antibiotic biosynthesis; kanamycin biosynthesis. In terms of biological role, glycosyltransferase involved in the biosynthesis of kanamycins by catalyzing the transfer of the hexose kanosamine from UDP-alpha-D-kanosamine to disaccharide precursors. Can also use UDP-alpha-D-glucose as sugar donor with much lower efficiency. This chain is Alpha-D-kanosaminyltransferase (kanE), found in Streptomyces kanamyceticus.